A 571-amino-acid chain; its full sequence is uncharacterized protein (571 aa).

3 disordered regions span residues 71–128, 142–258, and 298–336; these read TNHY…RVTA, NKND…PQNE, and LNRQ…TTKR. A compositionally biased stretch (polar residues) spans 88-113; the sequence is PNRSGVSSPVNDGASSPTQRGGTTPA. The span at 168 to 184 shows a compositional bias: pro residues; that stretch reads RGYPGPGPRGYPGPGPR. The span at 205-215 shows a compositional bias: low complexity; it reads QGPRRYSCPGP. Gly residues predominate over residues 217–234; it reads GYPGPGSSGRPDPGGGLQ. Residues 311-326 show a composition bias toward low complexity; it reads PEKQQTPPPEETQNAQ.

This is an uncharacterized protein from Drosophila melanogaster (Fruit fly).